The primary structure comprises 297 residues: Vacuolar protein sorting-associated protein 26C (297 aa).

The protein belongs to the VPS26 family. As to quaternary structure, component of the commander complex that is essential for endosomal recycling of transmembrane cargos; the commander complex is composed of the CCC subcomplex and the retriever subcomplex. Component of the heterotrimeric retriever complex consisting of VPS26C, VPS29 and VPS35L; within the complex interacts with VPS35L. Interacts with SNX17 (via C-terminus); the interaction is direct and associates SNX17 with the retriever complex. Interacts with SNX31; the interaction is direct. As to expression, ubiquitously expressed.

Its subcellular location is the endosome. In terms of biological role, component of the commander complex that is essential for endosomal recycling of transmembrane cargos; the commander complex is composed of the CCC subcomplex and the retriever subcomplex. Component of the retriever complex, which is a heterotrimeric complex related to retromer cargo-selective complex (CSC) and essential for retromer-independent retrieval and recycling of numerous cargos such as integrin alpha-5/beta-1 (ITGA5:ITGB1). The recruitment of the retriever complex to the endosomal membrane involves CCC and WASH complexes. In the endosomes, drives the retriever and recycling of NxxY-motif-containing cargo proteins by coupling to SNX17, a cargo essential for the homeostatic maintenance of numerous cell surface proteins associated with processes that include cell migration, cell adhesion, nutrient supply and cell signaling. Its function is as follows. (Microbial infection) The heterotrimeric retriever complex, in collaboration with the CCC complex, mediates the exit of human papillomavirus to the cell surface. The sequence is that of Vacuolar protein sorting-associated protein 26C from Homo sapiens (Human).